Consider the following 190-residue polypeptide: dCTP deaminase, dUMP-forming (190 aa).

DCTP is bound by residues 101 to 106 (KSSLGR), aspartate 119, 127 to 129 (TLE), glutamine 148, tyrosine 162, and glutamine 174. Residue glutamate 129 is the Proton donor/acceptor of the active site. The tract at residues 161-190 (PYGSSSVGSKYQGQRGPTPSRSYQNFVKND) is disordered. The segment covering 163–190 (GSSSVGSKYQGQRGPTPSRSYQNFVKND) has biased composition (polar residues).

Belongs to the dCTP deaminase family. Homotrimer.

It carries out the reaction dCTP + 2 H2O = dUMP + NH4(+) + diphosphate. Its pathway is pyrimidine metabolism; dUMP biosynthesis; dUMP from dCTP: step 1/1. Functionally, bifunctional enzyme that catalyzes both the deamination of dCTP to dUTP and the hydrolysis of dUTP to dUMP without releasing the toxic dUTP intermediate. The sequence is that of dCTP deaminase, dUMP-forming from Mycolicibacterium vanbaalenii (strain DSM 7251 / JCM 13017 / BCRC 16820 / KCTC 9966 / NRRL B-24157 / PYR-1) (Mycobacterium vanbaalenii).